The following is a 386-amino-acid chain: Putative aminotransferase YugH (386 aa).

The residue at position 234 (lysine 234) is an N6-(pyridoxal phosphate)lysine.

Belongs to the class-I pyridoxal-phosphate-dependent aminotransferase family. Pyridoxal 5'-phosphate is required as a cofactor.

The protein resides in the cytoplasm. The chain is Putative aminotransferase YugH (yugH) from Bacillus subtilis (strain 168).